Consider the following 262-residue polypeptide: MALGLKCFRMVHPTFRNYLAASIRPVSEVTLKTVHERQHGHRQYMAYSAVPVRHFATKKAKAKGKGQSQTRVNINAALVEDIINLEEVNEEMKSVIEALKDNFNKTLNIRTSPGSLDKIAVVTADGKLALNQISQISMKSPQLILVNMASFPECTAAAIKAIRESGMNLNPEVEGTLIRVPIPQVTREHREMLVKLAKQNTNKAKDSLRKVRTNSMNKLKKSKDTVSEDTIRLIEKQISQMADDTVAELDRHLAVKTKELLG.

Residues 1 to 55 (MALGLKCFRMVHPTFRNYLAASIRPVSEVTLKTVHERQHGHRQYMAYSAVPVRHF) constitute a mitochondrion transit peptide.

The protein belongs to the RRF family.

It is found in the mitochondrion. Responsible for the disassembly of ribosomes from messenger RNA at the termination of mitochondrial protein biosynthesis. Acts in collaboration with GFM2. Promotes mitochondrial ribosome recycling by dissolution of intersubunit contacts. In Homo sapiens (Human), this protein is Ribosome-recycling factor, mitochondrial.